The following is a 340-amino-acid chain: Protein-glutamate methylesterase/protein-glutamine glutaminase 1 (340 aa).

The Response regulatory domain maps to Lys-5 to Ile-122. Position 56 is a 4-aspartylphosphate (Asp-56). One can recognise a CheB-type methylesterase domain in the interval Gly-148 to Ile-340. Residues Ser-160, His-187, and Asp-285 contribute to the active site.

Belongs to the CheB family. In terms of processing, phosphorylated by CheA. Phosphorylation of the N-terminal regulatory domain activates the methylesterase activity.

It localises to the cytoplasm. The enzyme catalyses [protein]-L-glutamate 5-O-methyl ester + H2O = L-glutamyl-[protein] + methanol + H(+). It carries out the reaction L-glutaminyl-[protein] + H2O = L-glutamyl-[protein] + NH4(+). Its function is as follows. Involved in chemotaxis. Part of a chemotaxis signal transduction system that modulates chemotaxis in response to various stimuli. Catalyzes the demethylation of specific methylglutamate residues introduced into the chemoreceptors (methyl-accepting chemotaxis proteins or MCP) by CheR. Also mediates the irreversible deamidation of specific glutamine residues to glutamic acid. In Carboxydothermus hydrogenoformans (strain ATCC BAA-161 / DSM 6008 / Z-2901), this protein is Protein-glutamate methylesterase/protein-glutamine glutaminase 1.